A 331-amino-acid polypeptide reads, in one-letter code: Beta-ketoacyl-[acyl-carrier-protein] synthase III (331 aa).

Active-site residues include cysteine 116 and histidine 256. The segment at 257-261 (QANTR) is ACP-binding. Residue asparagine 286 is part of the active site.

The protein belongs to the thiolase-like superfamily. FabH family. In terms of assembly, homodimer.

It is found in the cytoplasm. It catalyses the reaction malonyl-[ACP] + acetyl-CoA + H(+) = 3-oxobutanoyl-[ACP] + CO2 + CoA. The protein operates within lipid metabolism; fatty acid biosynthesis. Its function is as follows. Catalyzes the condensation reaction of fatty acid synthesis by the addition to an acyl acceptor of two carbons from malonyl-ACP. Catalyzes the first condensation reaction which initiates fatty acid synthesis and may therefore play a role in governing the total rate of fatty acid production. Possesses both acetoacetyl-ACP synthase and acetyl transacylase activities. Its substrate specificity determines the biosynthesis of branched-chain and/or straight-chain of fatty acids. This chain is Beta-ketoacyl-[acyl-carrier-protein] synthase III, found in Caldanaerobacter subterraneus subsp. tengcongensis (strain DSM 15242 / JCM 11007 / NBRC 100824 / MB4) (Thermoanaerobacter tengcongensis).